The primary structure comprises 51 residues: uncharacterized protein (51 aa).

The protein to E.coli YdaF.

This is an uncharacterized protein from Escherichia coli O157:H7.